A 1093-amino-acid chain; its full sequence is Isomaltosyltransferase (1093 aa).

The signal sequence occupies residues 1-29 (MYVRNLTGSFRFSLSFLLCFCLFVPSIYA). Residue Asp-566 is the Nucleophile of the active site. Residue Glu-569 is part of the active site. The active-site Proton donor is Asp-631. The region spanning 968–1091 (VEYEAEFGVQ…GINFDNIAIV (124 aa)) is the CBM6 domain.

The protein belongs to the glycosyl hydrolase 31 family.

It localises to the secreted. The catalysed reaction is 2 alpha-isomaltosyl-(1-&gt;4)-D-maltotriose = alpha-isomaltosyl-(1-&gt;3)-alpha-isomaltosyl-(1-&gt;4)-D-maltotriose + D-maltotriose. It carries out the reaction alpha-isomaltosyl-(1-&gt;3)-alpha-isomaltosyl-(1-&gt;4)-D-maltotriose = cyclobis-(1-&gt;3)-alpha-D-isomaltosyl + D-maltotriose. Its activity is regulated as follows. Strongly inhibited by Hg(2+) and moderately inhibited by Cu(2+) and Pb(2+). Other metal ions, Tris and EDTA have almost no effects. Glycosyltransferase involved, together with CtsZ, in the conversion of alpha-1,4-glucan into a cyclic tetrasaccharide (CTS) constructed from four alpha-glucopyranosyl residues. Catalyzes the alpha-(1-&gt;3) transfer of the isomaltosyl moiety of alpha-isomaltosyl-(1-&gt;4)-D-maltotriose to another alpha-isomaltosyl-(1-&gt;4)-D-maltotriose, resulting in alpha-isomaltosyl-(1-&gt;3)-alpha-isomaltosyl-alpha-(1-&gt;4)-maltotriose formation. In addition, the enzyme catalyzes the intramolecular cyclization of the product, generating the cyclic tetrasaccharide cyclobis-(1-&gt;6)-alpha-nigerosyl. In Sporosarcina globispora (Bacillus globisporus), this protein is Isomaltosyltransferase.